The sequence spans 545 residues: CTP synthase (545 aa).

The interval M1–L266 is amidoligase domain. S14 contacts CTP. S14 is a binding site for UTP. ATP-binding positions include S15–I20 and D72. Positions 72 and 140 each coordinate Mg(2+). Residues D147 to E149, K187 to Q192, and K223 each bind CTP. UTP is bound by residues K187–Q192 and K223. An ATP-binding site is contributed by K239–V241. Residues T291–S542 enclose the Glutamine amidotransferase type-1 domain. G352 lines the L-glutamine pocket. The Nucleophile; for glutamine hydrolysis role is filled by C379. L-glutamine-binding positions include L380–Q383, E403, and R470. Active-site residues include H515 and E517.

This sequence belongs to the CTP synthase family. As to quaternary structure, homotetramer.

It catalyses the reaction UTP + L-glutamine + ATP + H2O = CTP + L-glutamate + ADP + phosphate + 2 H(+). It carries out the reaction L-glutamine + H2O = L-glutamate + NH4(+). The enzyme catalyses UTP + NH4(+) + ATP = CTP + ADP + phosphate + 2 H(+). It functions in the pathway pyrimidine metabolism; CTP biosynthesis via de novo pathway; CTP from UDP: step 2/2. Its activity is regulated as follows. Allosterically activated by GTP, when glutamine is the substrate; GTP has no effect on the reaction when ammonia is the substrate. The allosteric effector GTP functions by stabilizing the protein conformation that binds the tetrahedral intermediate(s) formed during glutamine hydrolysis. Inhibited by the product CTP, via allosteric rather than competitive inhibition. Its function is as follows. Catalyzes the ATP-dependent amination of UTP to CTP with either L-glutamine or ammonia as the source of nitrogen. Regulates intracellular CTP levels through interactions with the four ribonucleotide triphosphates. This is CTP synthase from Actinobacillus pleuropneumoniae serotype 7 (strain AP76).